The chain runs to 143 residues: Large ribosomal subunit protein uL13 (143 aa).

Belongs to the universal ribosomal protein uL13 family. Part of the 50S ribosomal subunit.

This protein is one of the early assembly proteins of the 50S ribosomal subunit, although it is not seen to bind rRNA by itself. It is important during the early stages of 50S assembly. The protein is Large ribosomal subunit protein uL13 of Desulfitobacterium hafniense (strain DSM 10664 / DCB-2).